The primary structure comprises 201 residues: Proteasome subunit beta type-2 (201 aa).

Met-1 carries the N-acetylmethionine modification.

Belongs to the peptidase T1B family. The 26S proteasome consists of a 20S proteasome core and two 19S regulatory subunits. The 20S proteasome core is a barrel-shaped complex made of 28 subunits that are arranged in four stacked rings. The two outer rings are each formed by seven alpha subunits, and the two inner rings are formed by seven beta subunits. The proteolytic activity is exerted by three beta-subunits PSMB5, PSMB6 and PSMB7. In terms of tissue distribution, detected in liver (at protein level).

It is found in the cytoplasm. Its subcellular location is the nucleus. Its function is as follows. Non-catalytic component of the 20S core proteasome complex involved in the proteolytic degradation of most intracellular proteins. This complex plays numerous essential roles within the cell by associating with different regulatory particles. Associated with two 19S regulatory particles, forms the 26S proteasome and thus participates in the ATP-dependent degradation of ubiquitinated proteins. The 26S proteasome plays a key role in the maintenance of protein homeostasis by removing misfolded or damaged proteins that could impair cellular functions, and by removing proteins whose functions are no longer required. Associated with the PA200 or PA28, the 20S proteasome mediates ubiquitin-independent protein degradation. This type of proteolysis is required in several pathways including spermatogenesis (20S-PA200 complex) or generation of a subset of MHC class I-presented antigenic peptides (20S-PA28 complex). The chain is Proteasome subunit beta type-2 (Psmb2) from Mus musculus (Mouse).